The following is a 63-amino-acid chain: Omega-conotoxin Eu1.6 (63 aa).

Residues 1–21 form the signal peptide; it reads MGMRMMFTVFLLVVLATTVVS. The propeptide occupies 22 to 47; sequence FTSDRAPDGRNAAAKAFGLITPTVRK. Disulfide bonds link Cys49/Cys55 and Cys50/Cys63. A ser-Xaa-Pro motif, crucial for potent interaction with nAChR region spans residues 51–53; that stretch reads SNP.

Belongs to the conotoxin A superfamily. Expressed by the venom duct.

Its subcellular location is the secreted. In terms of biological role, this amidated peptide potently and teversibly inhibits Cav2.2/CACNA1B. Steady-state inactivation is enhanced at hyperpolarized membrane potentials. Also shows a weak interaction at alpha-3-beta-4/ CHRNA3-CHRNB4 and alpha-7/CHRNA7 nAChRs subtypes. In vivo, exhibits a potent analgesic activity in rat partial sciatic nerve injury and chronic constriction injury models. The protein is Omega-conotoxin Eu1.6 of Conus eburneus (Ivory cone).